The primary structure comprises 550 residues: MFCVQCEQTIRTPAGNGCSYAQGMCGKTAETSDLQDLLIAALQGLSAWAVKAREYGIINHDVDSFAPRAFFSTLTNVNFDSPRIVGYAREAIALREALKAQCLAVDANARVDNPMADLQLVSDDPGELQRQAAEFTPNKDKAAIGENILGLRLLCLYGLKGAAAYMEHAHVLGQYDNDIYAQYHKIMAWLGTWPADMNALLECSMEIGQMNFKVMSILDAGETGKYGHPTPTQVNVKATAGKCILISGHDLKDLYNLLEQTEGTGVNVYTHGEMLPAHGYPELRKFKHLVGNYGSGWQNQQVEFARFPGPIVMTSNCIIDPTVGAYDDRIWTRSIVGWPGVRHLDGDDFSAVIAQAQQMAGFPYSEIPHLITVGFGRQTLLDAADTLIDLVSREKLRHIFLLGGCDGARGERHYFTDFATSVPDDCLILTLACGKYRFNKLEFGDIEGLPRLVDAGQCNDAYSAIILAVTLAEKLGCGVNDLPLSLVLSWFEQKAIVILLTLLSLGVKNIVTGPTAPGFLTPDLLAVLNEKFGLRSITTVEEDMKQLLSA.

Positions 3, 6, 18, and 25 each coordinate [2Fe-2S] cluster. Positions 249, 273, 317, 405, 433, 458, 492, and 494 each coordinate hybrid [4Fe-2O-2S] cluster. A Cysteine persulfide modification is found at Cys-405.

The protein belongs to the HCP family. [2Fe-2S] cluster is required as a cofactor. It depends on hybrid [4Fe-2O-2S] cluster as a cofactor.

It is found in the cytoplasm. It catalyses the reaction A + NH4(+) + H2O = hydroxylamine + AH2 + H(+). In terms of biological role, catalyzes the reduction of hydroxylamine to form NH(3) and H(2)O. This Escherichia fergusonii (strain ATCC 35469 / DSM 13698 / CCUG 18766 / IAM 14443 / JCM 21226 / LMG 7866 / NBRC 102419 / NCTC 12128 / CDC 0568-73) protein is Hydroxylamine reductase.